We begin with the raw amino-acid sequence, 102 residues long: 10 kDa heat shock protein, mitochondrial (102 aa).

It belongs to the GroES chaperonin family. In terms of assembly, homohexamer.

It localises to the mitochondrion matrix. Its function is as follows. Eukaryotic CPN10 homolog which is essential for mitochondrial protein biogenesis, together with CPN60. Binds to CPN60 in the presence of Mg-ATP and suppresses the ATPase activity of the latter. This chain is 10 kDa heat shock protein, mitochondrial, found in Schistosoma japonicum (Blood fluke).